The primary structure comprises 86 residues: MLQRKPKYNSDYSDARSKKRKRCPFTAAGIREIDYKDIDTLTKFITERGKILPRRITGVSAYHQKKLTAAIKRARHVALLPFVAEV.

The protein belongs to the bacterial ribosomal protein bS18 family. As to quaternary structure, part of the 30S ribosomal subunit. Forms a tight heterodimer with protein bS6.

Its function is as follows. Binds as a heterodimer with protein bS6 to the central domain of the 16S rRNA, where it helps stabilize the platform of the 30S subunit. This Protochlamydia amoebophila (strain UWE25) protein is Small ribosomal subunit protein bS18.